Here is a 21-residue protein sequence, read N- to C-terminus: Outer membrane protein P2 (21 aa).

Disulfide bond interactions within and between MOMP molecules and other components form high molecular-weight oligomers.

The protein resides in the cell outer membrane. Functionally, structural rigidity of the outer membrane of elementary bodies and porin forming, permitting diffusion of solutes through the intracellular reticulate body membrane. Binds carcinoembryonic antigen (CEA). The sequence is that of Outer membrane protein P2 from Glaesserella parasuis (Haemophilus parasuis).